A 180-amino-acid polypeptide reads, in one-letter code: Protein PHLOEM PROTEIN 2-LIKE A9 (180 aa).

The tract at residues 1–21 (MSSQKSSHHKADSKMEQDNNR) is disordered. Residues 9-21 (HKADSKMEQDNNR) are compositionally biased toward basic and acidic residues.

In Arabidopsis thaliana (Mouse-ear cress), this protein is Protein PHLOEM PROTEIN 2-LIKE A9 (PP2A9).